Reading from the N-terminus, the 453-residue chain is mRNA cleavage and polyadenylation factor CLP1 (453 aa).

ATP is bound by residues glutamate 31, lysine 70, and 146-151 (NSGKTS).

Belongs to the Clp1 family. Clp1 subfamily. As to quaternary structure, component of a pre-mRNA cleavage factor complex. Interacts directly with PCF11.

It is found in the nucleus. Required for endonucleolytic cleavage during polyadenylation-dependent pre-mRNA 3'-end formation. This Scheffersomyces stipitis (strain ATCC 58785 / CBS 6054 / NBRC 10063 / NRRL Y-11545) (Yeast) protein is mRNA cleavage and polyadenylation factor CLP1.